Here is a 69-residue protein sequence, read N- to C-terminus: Putative membrane protein insertion efficiency factor (69 aa).

The protein belongs to the UPF0161 family.

The protein resides in the cell inner membrane. Its function is as follows. Could be involved in insertion of integral membrane proteins into the membrane. The protein is Putative membrane protein insertion efficiency factor of Syntrophotalea carbinolica (strain DSM 2380 / NBRC 103641 / GraBd1) (Pelobacter carbinolicus).